Reading from the N-terminus, the 127-residue chain is Small ribosomal subunit protein uS13 (127 aa).

Belongs to the universal ribosomal protein uS13 family. In terms of assembly, part of the 30S ribosomal subunit. Forms a loose heterodimer with protein S19. Forms two bridges to the 50S subunit in the 70S ribosome.

Located at the top of the head of the 30S subunit, it contacts several helices of the 16S rRNA. In the 70S ribosome it contacts the 23S rRNA (bridge B1a) and protein L5 of the 50S subunit (bridge B1b), connecting the 2 subunits; these bridges are implicated in subunit movement. Contacts the tRNAs in the A and P-sites. This Pelagibacter ubique (strain HTCC1062) protein is Small ribosomal subunit protein uS13.